The sequence spans 203 residues: Urease accessory protein UreG (203 aa).

Residue 12–19 (GPVGSGKT) coordinates GTP.

It belongs to the SIMIBI class G3E GTPase family. UreG subfamily. In terms of assembly, homodimer. UreD, UreF and UreG form a complex that acts as a GTP-hydrolysis-dependent molecular chaperone, activating the urease apoprotein by helping to assemble the nickel containing metallocenter of UreC. The UreE protein probably delivers the nickel.

It localises to the cytoplasm. Functionally, facilitates the functional incorporation of the urease nickel metallocenter. This process requires GTP hydrolysis, probably effectuated by UreG. This is Urease accessory protein UreG from Nitrosococcus oceani (strain ATCC 19707 / BCRC 17464 / JCM 30415 / NCIMB 11848 / C-107).